The following is a 535-amino-acid chain: Doublesex- and mab-3-related transcription factor A2 (535 aa).

A DNA-binding region (DM) is located at residues 69–116; it reads CARCRNHGVVSALKGHKRYCRWKDCLCAKCTLIAERQRVMAAQVALRR. A disordered region spans residues 200–315; that stretch reads LQAGRPGSPQ…GGPGPRQRTP (116 aa). The region spanning 313 to 348 is the DMA domain; that stretch reads RTPLDILTRVFPGHRRGVLELVLQGCGGDVVQAIEQ.

The protein belongs to the DMRT family.

The protein resides in the nucleus. May be involved in sexual development. The chain is Doublesex- and mab-3-related transcription factor A2 (DMRTA2) from Bos taurus (Bovine).